Reading from the N-terminus, the 161-residue chain is MAGILRSIVQRPPGRLQTATKGVEPLVCVDWIRHKFTRSRIPDEVFRPSPEDHEKYGGDPQQPHKLHIVTRIKSTKRRPYWEKDIIKMLGLQKAHTPQVHKNIPSVNAKLKIVKHLIRIKPLKLPQGLPTEEDMSNTCLKSTGELVTRWLLNPADQEAKKC.

Residues 1–34 constitute a mitochondrion transit peptide; sequence MAGILRSIVQRPPGRLQTATKGVEPLVCVDWIRH.

Belongs to the universal ribosomal protein uL30 family. In terms of assembly, component of the mitochondrial ribosome large subunit (39S) which comprises a 16S rRNA and about 50 distinct proteins.

It is found in the mitochondrion. The protein is Large ribosomal subunit protein uL30m (MRPL30) of Bos taurus (Bovine).